A 295-amino-acid polypeptide reads, in one-letter code: Glycine--tRNA ligase alpha subunit (295 aa).

The protein belongs to the class-II aminoacyl-tRNA synthetase family. In terms of assembly, tetramer of two alpha and two beta subunits.

Its subcellular location is the cytoplasm. It carries out the reaction tRNA(Gly) + glycine + ATP = glycyl-tRNA(Gly) + AMP + diphosphate. The polypeptide is Glycine--tRNA ligase alpha subunit (Thermosynechococcus vestitus (strain NIES-2133 / IAM M-273 / BP-1)).